The following is a 412-amino-acid chain: 1-deoxy-D-xylulose 5-phosphate reductoisomerase (412 aa).

8 residues coordinate NADPH: Thr-10, Gly-11, Ser-12, Ile-13, Gly-36, Lys-37, Asn-38, and Asn-130. Lys-131 contributes to the 1-deoxy-D-xylulose 5-phosphate binding site. Residue Glu-132 coordinates NADPH. A Mn(2+)-binding site is contributed by Asp-156. 4 residues coordinate 1-deoxy-D-xylulose 5-phosphate: Ser-157, Glu-158, Ser-194, and His-217. Glu-158 lines the Mn(2+) pocket. Gly-223 contributes to the NADPH binding site. 1-deoxy-D-xylulose 5-phosphate is bound by residues Ser-230, Asn-235, Lys-236, and Glu-239. Residue Glu-239 coordinates Mn(2+).

The protein belongs to the DXR family. Mg(2+) is required as a cofactor. Requires Mn(2+) as cofactor.

The catalysed reaction is 2-C-methyl-D-erythritol 4-phosphate + NADP(+) = 1-deoxy-D-xylulose 5-phosphate + NADPH + H(+). The protein operates within isoprenoid biosynthesis; isopentenyl diphosphate biosynthesis via DXP pathway; isopentenyl diphosphate from 1-deoxy-D-xylulose 5-phosphate: step 1/6. Its function is as follows. Catalyzes the NADPH-dependent rearrangement and reduction of 1-deoxy-D-xylulose-5-phosphate (DXP) to 2-C-methyl-D-erythritol 4-phosphate (MEP). The protein is 1-deoxy-D-xylulose 5-phosphate reductoisomerase of Prochlorococcus marinus (strain NATL1A).